The sequence spans 161 residues: Endoribonuclease YbeY (161 aa).

3 residues coordinate Zn(2+): His-127, His-131, and His-137.

Belongs to the endoribonuclease YbeY family. The cofactor is Zn(2+).

It localises to the cytoplasm. Single strand-specific metallo-endoribonuclease involved in late-stage 70S ribosome quality control and in maturation of the 3' terminus of the 16S rRNA. The protein is Endoribonuclease YbeY of Listeria innocua serovar 6a (strain ATCC BAA-680 / CLIP 11262).